Reading from the N-terminus, the 797-residue chain is Adhesion G-protein coupled receptor G7 (797 aa).

The signal sequence occupies residues 1–26 (MASCRAWNLRVLVAVVCGLLTGIILG). The Extracellular portion of the chain corresponds to 27–438 (LGIWRIVIRI…QYPKSLDILS (412 aa)). Asparagine 82, asparagine 159, asparagine 178, asparagine 191, asparagine 247, asparagine 261, asparagine 312, asparagine 316, and asparagine 387 each carry an N-linked (GlcNAc...) asparagine glycan. One can recognise a GAIN-B domain in the interval 275–428 (FSVQKGASSS…AVLMTFKKDY (154 aa)). 2 cysteine pairs are disulfide-bonded: cysteine 383–cysteine 410 and cysteine 398–cysteine 412. The segment at 383–428 (CVYWNLSAKDWDTYGCQKDKGTDGFLRCRCNHTTNFAVLMTFKKDY) is GPS. The N-linked (GlcNAc...) asparagine glycan is linked to asparagine 413. The chain crosses the membrane as a helical span at residues 439 to 459 (NVGCALSVTGLALTVIFQIVT). The Cytoplasmic portion of the chain corresponds to 460–468 (RKVRKTSVT). A helical transmembrane segment spans residues 469–489 (WVLVNLCISMLIFNLLFVFGI). The Extracellular portion of the chain corresponds to 490-528 (ENSNKNLQTSDGDINNIDFDNNDIPRTDTINIPNPMCTA). A helical transmembrane segment spans residues 529 to 549 (IAALLHYFLLVTFTWNALSAA). Over 550–565 (QLYYLLIRTMKPLPRH) the chain is Cytoplasmic. A helical transmembrane segment spans residues 566-586 (FILFISLIGWGVPAIVVAITV). At 587–623 (GVIYSQNGNNPQWELDYRQEKICWLAIPEPNGVIKSP) the chain is on the extracellular side. Residues 624–644 (LLWSFIVPVTIILISNVVMFI) form a helical membrane-spanning segment. Residues 645–669 (TISIKVLWKNNQNLTSTKKVSSMKK) lie on the Cytoplasmic side of the membrane. The helical transmembrane segment at 670 to 690 (IVSTLSVAVVFGITWILAYLM) threads the bilayer. Over 691–698 (LVNDDSIR) the chain is Extracellular. Residues 699–719 (IVFSYIFCLFNTTQGLQIFIL) traverse the membrane as a helical segment. At 720–797 (YTVRTKVFQS…SESDNAKESI (78 aa)) the chain is on the cytoplasmic side.

This sequence belongs to the G-protein coupled receptor 2 family. Adhesion G-protein coupled receptor (ADGR) subfamily.

It is found in the membrane. Its function is as follows. Orphan receptor. This is Adhesion G-protein coupled receptor G7 (ADGRG7) from Homo sapiens (Human).